The sequence spans 187 residues: Ribosome-recycling factor (187 aa).

Belongs to the RRF family.

The protein localises to the cytoplasm. In terms of biological role, responsible for the release of ribosomes from messenger RNA at the termination of protein biosynthesis. May increase the efficiency of translation by recycling ribosomes from one round of translation to another. In Rhodopseudomonas palustris (strain HaA2), this protein is Ribosome-recycling factor.